Here is a 466-residue protein sequence, read N- to C-terminus: Soluble pyridine nucleotide transhydrogenase (466 aa).

Residue 36–45 (ERYNNVGGGC) coordinates FAD.

The protein belongs to the class-I pyridine nucleotide-disulfide oxidoreductase family. FAD is required as a cofactor.

Its subcellular location is the cytoplasm. The enzyme catalyses NAD(+) + NADPH = NADH + NADP(+). Conversion of NADPH, generated by peripheral catabolic pathways, to NADH, which can enter the respiratory chain for energy generation. The polypeptide is Soluble pyridine nucleotide transhydrogenase (Yersinia enterocolitica serotype O:8 / biotype 1B (strain NCTC 13174 / 8081)).